Here is a 210-residue protein sequence, read N- to C-terminus: Probable transcriptional regulator ycf29 (210 aa).

Residues 3–119 enclose the Response regulatory domain; the sequence is NILILDTDIG…ELVVIIEGVL (117 aa). 4-aspartylphosphate is present on Asp-52. Residues 142 to 207 form the HTH luxR-type domain; it reads SNNLKINFTP…ELVKYALENN (66 aa).

The protein localises to the plastid. Its subcellular location is the cyanelle. The protein is Probable transcriptional regulator ycf29 (ycf29) of Cyanophora paradoxa.